Consider the following 370-residue polypeptide: ADP-ribosylhydrolase ARH3 (370 aa).

Residue glutamate 47 participates in Mg(2+) binding. Threonine 70 carries the phosphothreonine modification. Mg(2+)-binding residues include threonine 82, aspartate 83, and aspartate 84. Position 83 (aspartate 83) interacts with substrate. Substrate is bound by residues 152–158 (KGSYGNG), histidine 188, leucine 241, and isoleucine 277. Mg(2+)-binding residues include aspartate 320, aspartate 322, and threonine 323.

This sequence belongs to the ADP-ribosylglycohydrolase family. In terms of assembly, monomer. Requires Mg(2+) as cofactor. Ubiquitous.

The protein resides in the nucleus. It is found in the cytoplasm. The protein localises to the chromosome. Its subcellular location is the mitochondrion matrix. It catalyses the reaction [(1''-&gt;2')-ADP-alpha-D-ribose](n) + H2O = [(1''-&gt;2')-ADP-alpha-D-ribose](n-1) + ADP-D-ribose. The catalysed reaction is 1''-O-acetyl-ADP-alpha-D-ribose + H2O = ADP-D-ribose + acetate + H(+). It carries out the reaction O-(ADP-D-ribosyl)-L-seryl-[protein] + H2O = ADP-D-ribose + L-seryl-[protein]. The enzyme catalyses alpha-NAD(+) + H2O = ADP-D-ribose + nicotinamide + H(+). Its activity is regulated as follows. The protein undergoes a dramatic conformational switch from closed to open states upon substrate-binding, which enables specific substrate recognition for the 1''-O-linkage. The glutamate flap (Glu-47) blocks substrate entrance to Mg(2+) in the unliganded closed state. In presence of substrate, Glu-47 is ejected from the active site: this closed-to-open transition significantly widens the substrate-binding channel and precisely positions the scissile 1''-O-linkage for cleavage while securing tightly 2'- and 3'-hydroxyls of ADP-ribose. Functionally, ADP-ribosylhydrolase that preferentially hydrolyzes the scissile alpha-O-linkage attached to the anomeric C1'' position of ADP-ribose and acts on different substrates, such as proteins ADP-ribosylated on serine and threonine, free poly(ADP-ribose) and O-acetyl-ADP-D-ribose. Specifically acts as a serine mono-ADP-ribosylhydrolase by mediating the removal of mono-ADP-ribose attached to serine residues on proteins, thereby playing a key role in DNA damage response. Serine ADP-ribosylation of proteins constitutes the primary form of ADP-ribosylation of proteins in response to DNA damage. Does not hydrolyze ADP-ribosyl-arginine, -cysteine, -diphthamide, or -asparagine bonds. Also able to degrade protein free poly(ADP-ribose), which is synthesized in response to DNA damage: free poly(ADP-ribose) acts as a potent cell death signal and its degradation by ADPRHL2 protects cells from poly(ADP-ribose)-dependent cell death, a process named parthanatos. Also hydrolyzes free poly(ADP-ribose) in mitochondria. Specifically digests O-acetyl-ADP-D-ribose, a product of deacetylation reactions catalyzed by sirtuins. Specifically degrades 1''-O-acetyl-ADP-D-ribose isomer, rather than 2''-O-acetyl-ADP-D-ribose or 3''-O-acetyl-ADP-D-ribose isomers. This Mus musculus (Mouse) protein is ADP-ribosylhydrolase ARH3 (Adprs).